A 616-amino-acid chain; its full sequence is Chaperone protein DnaK (616 aa).

Thr-174 bears the Phosphothreonine; by autocatalysis mark. The disordered stretch occupies residues 576 to 616 (QASAPGAGPEGASGGFGGENKKDDNVVDADYTVIDDDKKKT). The segment covering 583-593 (GPEGASGGFGG) has biased composition (gly residues).

The protein belongs to the heat shock protein 70 family.

Its function is as follows. Acts as a chaperone. The chain is Chaperone protein DnaK from Heliobacterium modesticaldum (strain ATCC 51547 / Ice1).